A 101-amino-acid polypeptide reads, in one-letter code: Urease subunit gamma (101 aa).

Belongs to the urease gamma subunit family. In terms of assembly, heterotrimer of UreA (gamma), UreB (beta) and UreC (alpha) subunits. Three heterotrimers associate to form the active enzyme.

The protein resides in the cytoplasm. The enzyme catalyses urea + 2 H2O + H(+) = hydrogencarbonate + 2 NH4(+). It participates in nitrogen metabolism; urea degradation; CO(2) and NH(3) from urea (urease route): step 1/1. This chain is Urease subunit gamma, found in Ureaplasma parvum serovar 3 (strain ATCC 27815 / 27 / NCTC 11736).